The following is a 32-amino-acid chain: Conotoxin sr7a (32 aa).

3 disulfide bridges follow: Cys1–Cys17, Cys8–Cys21, and Cys16–Cys31. Ser32 carries the post-translational modification Serine amide.

As to expression, expressed by the venom duct.

It localises to the secreted. Its function is as follows. Elicits hyperactivity when injected intracranially into mice and produces paralysis when injected into the pedal muscle of freshwater snails, Pomacea paludosa, but it has no apparent effect after intramuscular injection into the limpet Patella opea or the freshwater fish Lebistes reticulatus. The chain is Conotoxin sr7a from Conus spurius (Alphabet cone).